The primary structure comprises 420 residues: Nucleobindin-2 (420 aa).

The N-terminal stretch at methionine 1–alanine 24 is a signal peptide. Residues lysine 171 to proline 223 mediate DNA binding. Residues leucine 195 to lysine 212 are compositionally biased toward basic and acidic residues. The tract at residues leucine 195 to serine 225 is disordered. Residues lysine 213–isoleucine 420 form a binds to necdin region. 2 consecutive EF-hand domains span residues proline 241–lysine 276 and glutamate 293–leucine 328. Ca(2+) contacts are provided by aspartate 254 and asparagine 256. Serine 257 bears the Phosphoserine mark. Positions 258, 265, 306, 308, 310, and 317 each coordinate Ca(2+). Positions glutamate 304–glutamate 334 match the GBA motif. Phosphoserine is present on serine 332. Residues glutamine 398–isoleucine 420 are disordered.

Belongs to the nucleobindin family. In terms of assembly, interacts (via GBA motif) with guanine nucleotide-binding protein G(i) alpha subunit GNAI3. Preferentially interacts with inactive rather than active GNAI3. Interaction with GNAI3 is inhibited when NUCB2 binds calcium, probably due to a conformational change which renders the GBA motif inaccessible. Binds to the postmitotic growth suppressor NDN; coexpression abolishes NUCB2 secretion. Interacts with MC4R. As to expression, predominantly expressed in spleen, testis and normal stomach.

Its subcellular location is the golgi apparatus. It is found in the membrane. The protein localises to the cytoplasm. The protein resides in the secreted. It localises to the endoplasmic reticulum. Its subcellular location is the nucleus envelope. Calcium-binding protein which may have a role in calcium homeostasis. Acts as a non-receptor guanine nucleotide exchange factor which binds to and activates guanine nucleotide-binding protein (G-protein) alpha subunit GNAI3. Functionally, anorexigenic peptide, seems to play an important role in hypothalamic pathways regulating food intake and energy homeostasis, acting in a leptin-independent manner. May also exert hypertensive roles and modulate blood pressure through directly acting on peripheral arterial resistance. In intestinal epithelial cells, plays a role in the inhibition of hepatic glucose production via MC4R receptor leading to increased cyclic adenosine monophosphate (cAMP) levels and glucagon-like peptide 1 (GLP-1) secretion. This Homo sapiens (Human) protein is Nucleobindin-2.